The chain runs to 113 residues: Large ribosomal subunit protein bL19 (113 aa).

The protein belongs to the bacterial ribosomal protein bL19 family.

Its function is as follows. This protein is located at the 30S-50S ribosomal subunit interface and may play a role in the structure and function of the aminoacyl-tRNA binding site. In Moorella thermoacetica (strain ATCC 39073 / JCM 9320), this protein is Large ribosomal subunit protein bL19.